Consider the following 884-residue polypeptide: Lon protease homolog 2, peroxisomal (884 aa).

The Lon N-terminal domain occupies 12 to 255; that stretch reads LAILPFRNKV…KATELVDRHL (244 aa). The tract at residues 67–101 is disordered; that stretch reads SLLSPGVGSDSGEGGSKAPGGSAGESTKQDTKNGK. Residues 75-89 are compositionally biased toward gly residues; that stretch reads SDSGEGGSKAPGGSA. 408–415 contacts ATP; sequence GPPGVGKT. A Lon proteolytic domain is found at 689–874; it reads VASPGVSVGL…EEVLDHAFEG (186 aa). Active-site residues include S780 and K823. The Microbody targeting signal motif lies at 882-884; the sequence is SKL.

This sequence belongs to the peptidase S16 family.

It localises to the peroxisome matrix. It catalyses the reaction Hydrolysis of proteins in presence of ATP.. Functionally, ATP-dependent serine protease that mediates the selective degradation of misfolded and unassembled polypeptides in the peroxisomal matrix. Necessary for type 2 peroxisome targeting signal (PTS2)-containing protein processing and facilitates peroxisome matrix protein import. This chain is Lon protease homolog 2, peroxisomal, found in Oryza sativa subsp. japonica (Rice).